Here is a 358-residue protein sequence, read N- to C-terminus: NADH-quinone oxidoreductase subunit H (358 aa).

Transmembrane regions (helical) follow at residues 20–40 (ITVG…IPLI), 95–115 (ALFY…WAVI), 128–148 (IGLL…IIAG), 168–188 (ISYE…SGSM), 206–226 (VFSW…ISAV), 253–273 (GFAF…ISAL), 290–310 (WGFI…AVLY), and 334–354 (VLIP…ISPL).

Belongs to the complex I subunit 1 family. In terms of assembly, NDH-1 is composed of 14 different subunits. Subunits NuoA, H, J, K, L, M, N constitute the membrane sector of the complex.

The protein resides in the cell inner membrane. It carries out the reaction a quinone + NADH + 5 H(+)(in) = a quinol + NAD(+) + 4 H(+)(out). Functionally, NDH-1 shuttles electrons from NADH, via FMN and iron-sulfur (Fe-S) centers, to quinones in the respiratory chain. The immediate electron acceptor for the enzyme in this species is believed to be ubiquinone. Couples the redox reaction to proton translocation (for every two electrons transferred, four hydrogen ions are translocated across the cytoplasmic membrane), and thus conserves the redox energy in a proton gradient. This subunit may bind ubiquinone. The protein is NADH-quinone oxidoreductase subunit H of Neisseria meningitidis serogroup C (strain 053442).